The following is a 114-amino-acid chain: Non-specific lipid-transfer protein 1 (114 aa).

A signal peptide spans M1–E23. 4 disulfide bridges follow: C27–C73, C37–C50, C51–C96, and C71–C110.

The protein belongs to the plant LTP family. As to expression, high expression in leaf epidermis and shoot apex, and also in root epidermis during seedling germination.

In terms of biological role, plant non-specific lipid-transfer proteins transfer phospholipids as well as galactolipids across membranes. Binds cis-unsaturated fatty acids and jasmonic acid with a higher affinity than linear chain fatty acids. Formation of the complex with jasmonic acid results in a conformational change facilitating the LPT1 binding on the elicitin plasma membrane receptor that is known to be involved in plant defense induction. May also play a role in wax or cutin deposition in the cell walls of expanding epidermal cells and certain secretory tissues. This chain is Non-specific lipid-transfer protein 1 (LTP1), found in Nicotiana tabacum (Common tobacco).